A 145-amino-acid polypeptide reads, in one-letter code: D-aminoacyl-tRNA deacylase (145 aa).

A Gly-cisPro motif, important for rejection of L-amino acids motif is present at residues 137–138 (GP).

The protein belongs to the DTD family. As to quaternary structure, homodimer.

The protein resides in the cytoplasm. The enzyme catalyses glycyl-tRNA(Ala) + H2O = tRNA(Ala) + glycine + H(+). It catalyses the reaction a D-aminoacyl-tRNA + H2O = a tRNA + a D-alpha-amino acid + H(+). Its function is as follows. An aminoacyl-tRNA editing enzyme that deacylates mischarged D-aminoacyl-tRNAs. Also deacylates mischarged glycyl-tRNA(Ala), protecting cells against glycine mischarging by AlaRS. Acts via tRNA-based rather than protein-based catalysis; rejects L-amino acids rather than detecting D-amino acids in the active site. By recycling D-aminoacyl-tRNA to D-amino acids and free tRNA molecules, this enzyme counteracts the toxicity associated with the formation of D-aminoacyl-tRNA entities in vivo and helps enforce protein L-homochirality. This Salmonella choleraesuis (strain SC-B67) protein is D-aminoacyl-tRNA deacylase.